We begin with the raw amino-acid sequence, 210 residues long: uncharacterized protein (210 aa).

2 disordered regions span residues 1-21 (MHRL…TDAI) and 168-210 (EALQ…STAQ). Residues 21-175 (IDSLDKRSDS…ELEALQQESS (155 aa)) adopt a coiled-coil conformation. Polar residues predominate over residues 174–184 (SSWLGDQSTAE).

It belongs to the SNF7 family.

This is an uncharacterized protein from Schizosaccharomyces pombe (strain 972 / ATCC 24843) (Fission yeast).